Here is a 473-residue protein sequence, read N- to C-terminus: Glutamate--tRNA ligase (473 aa).

The 'HIGH' region motif lies at 13–23 (PSPTGFLHVGG). A 'KMSKS' region motif is present at residues 240–244 (KLSKR). Lys-243 is an ATP binding site.

Belongs to the class-I aminoacyl-tRNA synthetase family. Glutamate--tRNA ligase type 1 subfamily. Monomer.

The protein localises to the cytoplasm. It catalyses the reaction tRNA(Glu) + L-glutamate + ATP = L-glutamyl-tRNA(Glu) + AMP + diphosphate. In terms of biological role, catalyzes the attachment of glutamate to tRNA(Glu) in a two-step reaction: glutamate is first activated by ATP to form Glu-AMP and then transferred to the acceptor end of tRNA(Glu). This is Glutamate--tRNA ligase from Shewanella denitrificans (strain OS217 / ATCC BAA-1090 / DSM 15013).